The primary structure comprises 109 residues: FK506-binding protein (109 aa).

The PPIase FKBP-type domain occupies glycine 20–tyrosine 108.

It belongs to the FKBP-type PPIase family.

The catalysed reaction is [protein]-peptidylproline (omega=180) = [protein]-peptidylproline (omega=0). With respect to regulation, inhibited by FK506. In terms of biological role, PPIases accelerate the folding of proteins. The sequence is that of FK506-binding protein (fbp) from Neisseria meningitidis serogroup B (strain ATCC BAA-335 / MC58).